A 382-amino-acid chain; its full sequence is Chaperone protein DnaJ (382 aa).

Residues 5-70 (DFYEILGVPK…QKRAAYDQYG (66 aa)) enclose the J domain. The segment at 137 to 215 (GVTKEIRIPT…CHGHGRVEKT (79 aa)) adopts a CR-type zinc-finger fold. The Zn(2+) site is built by Cys-150, Cys-153, Cys-167, Cys-170, Cys-189, Cys-192, Cys-203, and Cys-206. 4 CXXCXGXG motif repeats span residues 150-157 (CDICHGSG), 167-174 (CPTCHGSG), 189-196 (CPHCHGRG), and 203-210 (CNKCHGHG).

The protein belongs to the DnaJ family. Homodimer. Zn(2+) is required as a cofactor.

Its subcellular location is the cytoplasm. Participates actively in the response to hyperosmotic and heat shock by preventing the aggregation of stress-denatured proteins and by disaggregating proteins, also in an autonomous, DnaK-independent fashion. Unfolded proteins bind initially to DnaJ; upon interaction with the DnaJ-bound protein, DnaK hydrolyzes its bound ATP, resulting in the formation of a stable complex. GrpE releases ADP from DnaK; ATP binding to DnaK triggers the release of the substrate protein, thus completing the reaction cycle. Several rounds of ATP-dependent interactions between DnaJ, DnaK and GrpE are required for fully efficient folding. Also involved, together with DnaK and GrpE, in the DNA replication of plasmids through activation of initiation proteins. In Enterobacter sp. (strain 638), this protein is Chaperone protein DnaJ.